The chain runs to 419 residues: Histidine--tRNA ligase (419 aa).

It belongs to the class-II aminoacyl-tRNA synthetase family. Homodimer.

It localises to the cytoplasm. It carries out the reaction tRNA(His) + L-histidine + ATP = L-histidyl-tRNA(His) + AMP + diphosphate + H(+). This chain is Histidine--tRNA ligase, found in Mycoplasmoides gallisepticum (strain R(low / passage 15 / clone 2)) (Mycoplasma gallisepticum).